Consider the following 322-residue polypeptide: tRNA U34 carboxymethyltransferase (322 aa).

Carboxy-S-adenosyl-L-methionine contacts are provided by residues lysine 90, tryptophan 104, lysine 109, glycine 129, 151–153 (DPT), 179–180 (ME), methionine 195, tyrosine 199, and arginine 314.

The protein belongs to the class I-like SAM-binding methyltransferase superfamily. CmoB family. In terms of assembly, homotetramer.

The catalysed reaction is carboxy-S-adenosyl-L-methionine + 5-hydroxyuridine(34) in tRNA = 5-carboxymethoxyuridine(34) in tRNA + S-adenosyl-L-homocysteine + H(+). Catalyzes carboxymethyl transfer from carboxy-S-adenosyl-L-methionine (Cx-SAM) to 5-hydroxyuridine (ho5U) to form 5-carboxymethoxyuridine (cmo5U) at position 34 in tRNAs. In Alcanivorax borkumensis (strain ATCC 700651 / DSM 11573 / NCIMB 13689 / SK2), this protein is tRNA U34 carboxymethyltransferase.